Here is a 182-residue protein sequence, read N- to C-terminus: dTTP/UTP pyrophosphatase (182 aa).

Asp-64 functions as the Proton acceptor in the catalytic mechanism.

The protein belongs to the Maf family. YhdE subfamily. A divalent metal cation is required as a cofactor.

The protein localises to the cytoplasm. The catalysed reaction is dTTP + H2O = dTMP + diphosphate + H(+). It carries out the reaction UTP + H2O = UMP + diphosphate + H(+). Functionally, nucleoside triphosphate pyrophosphatase that hydrolyzes dTTP and UTP. May have a dual role in cell division arrest and in preventing the incorporation of modified nucleotides into cellular nucleic acids. This is dTTP/UTP pyrophosphatase from Thermosipho melanesiensis (strain DSM 12029 / CIP 104789 / BI429).